Reading from the N-terminus, the 224-residue chain is UPF0758 protein Lm4b_01560 (224 aa).

An MPN domain is found at 102-224 (VVRCPEDAVK…YISLKEKGYF (123 aa)). Positions 173, 175, and 186 each coordinate Zn(2+). A JAMM motif motif is present at residues 173-186 (HNHPSGDPTPSSED).

It belongs to the UPF0758 family.

This is UPF0758 protein Lm4b_01560 from Listeria monocytogenes serotype 4b (strain CLIP80459).